The primary structure comprises 647 residues: DNA ligase (647 aa).

Residues 30–34 (DEEYD), 79–80 (SM), and glutamate 105 each bind NAD(+). Residue lysine 107 is the N6-AMP-lysine intermediate of the active site. Residues arginine 128, glutamate 162, and lysine 301 each coordinate NAD(+). Zn(2+) is bound by residues cysteine 395, cysteine 398, cysteine 411, and cysteine 416. One can recognise a BRCT domain in the interval 570 to 647 (KSDGVIFGKT…ESAFNELVKE (78 aa)).

The protein belongs to the NAD-dependent DNA ligase family. LigA subfamily. Mg(2+) serves as cofactor. It depends on Mn(2+) as a cofactor.

The catalysed reaction is NAD(+) + (deoxyribonucleotide)n-3'-hydroxyl + 5'-phospho-(deoxyribonucleotide)m = (deoxyribonucleotide)n+m + AMP + beta-nicotinamide D-nucleotide.. In terms of biological role, DNA ligase that catalyzes the formation of phosphodiester linkages between 5'-phosphoryl and 3'-hydroxyl groups in double-stranded DNA using NAD as a coenzyme and as the energy source for the reaction. It is essential for DNA replication and repair of damaged DNA. The sequence is that of DNA ligase from Campylobacter jejuni subsp. jejuni serotype O:2 (strain ATCC 700819 / NCTC 11168).